We begin with the raw amino-acid sequence, 207 residues long: Small ribosomal subunit protein uS4A (207 aa).

The region spanning 98-161 (RRLDNVVYRM…REHKRIKELA (64 aa)) is the S4 RNA-binding domain.

The protein belongs to the universal ribosomal protein uS4 family. Part of the 30S ribosomal subunit. Contacts protein S5. The interaction surface between S4 and S5 is involved in control of translational fidelity.

One of the primary rRNA binding proteins, it binds directly to 16S rRNA where it nucleates assembly of the body of the 30S subunit. Its function is as follows. With S5 and S12 plays an important role in translational accuracy. The sequence is that of Small ribosomal subunit protein uS4A from Symbiobacterium thermophilum (strain DSM 24528 / JCM 14929 / IAM 14863 / T).